The sequence spans 2017 residues: Rootletin (2017 aa).

2 coiled-coil regions span residues 70–262 (ATEM…KVTN) and 318–444 (ERDL…LETE). Over residues 464–483 (SESGVQLSGSERTADASNGS) the composition is skewed to polar residues. The interval 464-518 (SESGVQLSGSERTADASNGSLRGLSGQRTPSPPRRSSPGRGRSPRRGPSPACSDS) is disordered. The segment covering 499-513 (SSPGRGRSPRRGPSP) has biased composition (low complexity). Coiled coils occupy residues 546–1058 (QDLL…LAES) and 1091–1438 (EMER…GLRS). 2 disordered regions span residues 1184–1226 (LRES…RSAV) and 1443–1575 (GLGL…GRLS). Ser-1460, Ser-1470, Ser-1476, Ser-1483, Ser-1486, Ser-1490, and Ser-1496 each carry phosphoserine. A coiled-coil region spans residues 1505–1704 (EAVRGALREF…DSEVKAGTLQ (200 aa)). The span at 1510–1529 (ALREFLQELRSAQRERDELR) shows a compositional bias: basic and acidic residues. 2 positions are modified to phosphoserine: Ser-1575 and Ser-1660. Residues 1962-2017 (RSAQAQTERTLEARERAHRQRVRGLEEQVSTLKGQLQQELRRSSAPFSPPSGPPEK) are disordered. The span at 1989 to 1999 (QVSTLKGQLQQ) shows a compositional bias: polar residues. Residues 2008–2017 (FSPPSGPPEK) are compositionally biased toward pro residues.

The protein belongs to the rootletin family. As to quaternary structure, homomer. Interacts with KLC3, NEK2 and the N-terminus of CEP250. Interacts with CEP44. Interacts with CCDC102B (via N-terminus). In terms of processing, phosphorylated by NEK2 which may regulate its association with centrosomes.

It localises to the cytoplasm. It is found in the cytoskeleton. Its subcellular location is the microtubule organizing center. The protein localises to the centrosome. The protein resides in the centriole. It localises to the cilium basal body. In terms of biological role, major structural component of the ciliary rootlet, a cytoskeletal-like structure in ciliated cells which originates from the basal body at the proximal end of a cilium and extends proximally toward the cell nucleus. Furthermore, is required for the correct positioning of the cilium basal body relative to the cell nucleus, to allow for ciliogenesis. Contributes to centrosome cohesion before mitosis. In Homo sapiens (Human), this protein is Rootletin.